The following is a 230-amino-acid chain: 3-isopropylmalate dehydratase small subunit (230 aa).

It belongs to the LeuD family. LeuD type 1 subfamily. In terms of assembly, heterodimer of LeuC and LeuD.

The enzyme catalyses (2R,3S)-3-isopropylmalate = (2S)-2-isopropylmalate. It functions in the pathway amino-acid biosynthesis; L-leucine biosynthesis; L-leucine from 3-methyl-2-oxobutanoate: step 2/4. Its function is as follows. Catalyzes the isomerization between 2-isopropylmalate and 3-isopropylmalate, via the formation of 2-isopropylmaleate. This Bifidobacterium longum (strain DJO10A) protein is 3-isopropylmalate dehydratase small subunit.